Reading from the N-terminus, the 211-residue chain is Thiamine-phosphate synthase (211 aa).

4-amino-2-methyl-5-(diphosphooxymethyl)pyrimidine is bound by residues 39–43 (QLREK) and N71. Residues D72 and D91 each contribute to the Mg(2+) site. 4-amino-2-methyl-5-(diphosphooxymethyl)pyrimidine is bound at residue S110. 136–138 (TAT) contributes to the 2-[(2R,5Z)-2-carboxy-4-methylthiazol-5(2H)-ylidene]ethyl phosphate binding site. K139 contacts 4-amino-2-methyl-5-(diphosphooxymethyl)pyrimidine. 2-[(2R,5Z)-2-carboxy-4-methylthiazol-5(2H)-ylidene]ethyl phosphate contacts are provided by residues A167 and 187–188 (VS).

It belongs to the thiamine-phosphate synthase family. It depends on Mg(2+) as a cofactor.

It catalyses the reaction 2-[(2R,5Z)-2-carboxy-4-methylthiazol-5(2H)-ylidene]ethyl phosphate + 4-amino-2-methyl-5-(diphosphooxymethyl)pyrimidine + 2 H(+) = thiamine phosphate + CO2 + diphosphate. It carries out the reaction 2-(2-carboxy-4-methylthiazol-5-yl)ethyl phosphate + 4-amino-2-methyl-5-(diphosphooxymethyl)pyrimidine + 2 H(+) = thiamine phosphate + CO2 + diphosphate. The enzyme catalyses 4-methyl-5-(2-phosphooxyethyl)-thiazole + 4-amino-2-methyl-5-(diphosphooxymethyl)pyrimidine + H(+) = thiamine phosphate + diphosphate. Its pathway is cofactor biosynthesis; thiamine diphosphate biosynthesis; thiamine phosphate from 4-amino-2-methyl-5-diphosphomethylpyrimidine and 4-methyl-5-(2-phosphoethyl)-thiazole: step 1/1. Condenses 4-methyl-5-(beta-hydroxyethyl)thiazole monophosphate (THZ-P) and 2-methyl-4-amino-5-hydroxymethyl pyrimidine pyrophosphate (HMP-PP) to form thiamine monophosphate (TMP). The chain is Thiamine-phosphate synthase from Solidesulfovibrio magneticus (strain ATCC 700980 / DSM 13731 / RS-1) (Desulfovibrio magneticus).